Consider the following 490-residue polypeptide: Betaine aldehyde dehydrogenase (490 aa).

K(+) contacts are provided by threonine 26, isoleucine 27, and aspartate 93. 150–152 (GAW) contacts NAD(+). Residue lysine 162 is the Charge relay system of the active site. An NAD(+)-binding site is contributed by 176–179 (KPSE). K(+) is bound at residue valine 180. 230–233 (GTST) is an NAD(+) binding site. Leucine 246 is a K(+) binding site. Glutamate 252 serves as the catalytic Proton acceptor. 3 residues coordinate NAD(+): glycine 254, cysteine 286, and glutamate 387. The Nucleophile role is filled by cysteine 286. Residue cysteine 286 is modified to Cysteine sulfenic acid (-SOH). Residues lysine 457 and glycine 460 each contribute to the K(+) site. The active-site Charge relay system is the glutamate 464.

This sequence belongs to the aldehyde dehydrogenase family. In terms of assembly, dimer of dimers. It depends on K(+) as a cofactor.

The enzyme catalyses betaine aldehyde + NAD(+) + H2O = glycine betaine + NADH + 2 H(+). It participates in amine and polyamine biosynthesis; betaine biosynthesis via choline pathway; betaine from betaine aldehyde: step 1/1. Functionally, involved in the biosynthesis of the osmoprotectant glycine betaine. Catalyzes the irreversible oxidation of betaine aldehyde to the corresponding acid. This chain is Betaine aldehyde dehydrogenase, found in Pseudomonas paraeruginosa (strain DSM 24068 / PA7) (Pseudomonas aeruginosa (strain PA7)).